The following is a 139-amino-acid chain: Large ribosomal subunit protein bL20 (139 aa).

The protein belongs to the bacterial ribosomal protein bL20 family.

In terms of biological role, binds directly to 23S ribosomal RNA and is necessary for the in vitro assembly process of the 50S ribosomal subunit. It is not involved in the protein synthesizing functions of that subunit. The sequence is that of Large ribosomal subunit protein bL20 from Leuconostoc citreum (strain KM20).